Here is a 419-residue protein sequence, read N- to C-terminus: Serine hydroxymethyltransferase (419 aa).

Residues L121 and 125–127 (GHL) each bind (6S)-5,6,7,8-tetrahydrofolate. An N6-(pyridoxal phosphate)lysine modification is found at K229. Residue 354 to 356 (SPF) participates in (6S)-5,6,7,8-tetrahydrofolate binding.

Belongs to the SHMT family. Homodimer. It depends on pyridoxal 5'-phosphate as a cofactor.

It is found in the cytoplasm. It catalyses the reaction (6R)-5,10-methylene-5,6,7,8-tetrahydrofolate + glycine + H2O = (6S)-5,6,7,8-tetrahydrofolate + L-serine. The protein operates within one-carbon metabolism; tetrahydrofolate interconversion. Its pathway is amino-acid biosynthesis; glycine biosynthesis; glycine from L-serine: step 1/1. In terms of biological role, catalyzes the reversible interconversion of serine and glycine with tetrahydrofolate (THF) serving as the one-carbon carrier. This reaction serves as the major source of one-carbon groups required for the biosynthesis of purines, thymidylate, methionine, and other important biomolecules. Also exhibits THF-independent aldolase activity toward beta-hydroxyamino acids, producing glycine and aldehydes, via a retro-aldol mechanism. The protein is Serine hydroxymethyltransferase of Coxiella burnetii (strain CbuK_Q154) (Coxiella burnetii (strain Q154)).